The following is a 203-amino-acid chain: Putative 3-methyladenine DNA glycosylase (203 aa).

The protein belongs to the DNA glycosylase MPG family.

This Clostridium beijerinckii (strain ATCC 51743 / NCIMB 8052) (Clostridium acetobutylicum) protein is Putative 3-methyladenine DNA glycosylase.